The following is a 259-amino-acid chain: Undecaprenyl-diphosphatase (259 aa).

Helical transmembrane passes span 1 to 21, 40 to 60, 75 to 95, 101 to 121, 179 to 199, 206 to 226, and 239 to 259; these read MEIF…FLPI, QITL…IIFW, WLTI…ILFE, LFSS…LLYL, SFLL…KDAL, LTWL…YFAI, and TVFA…AGIF.

It belongs to the UppP family.

The protein localises to the cell inner membrane. The enzyme catalyses di-trans,octa-cis-undecaprenyl diphosphate + H2O = di-trans,octa-cis-undecaprenyl phosphate + phosphate + H(+). Catalyzes the dephosphorylation of undecaprenyl diphosphate (UPP). Confers resistance to bacitracin. The protein is Undecaprenyl-diphosphatase of Halothermothrix orenii (strain H 168 / OCM 544 / DSM 9562).